The sequence spans 372 residues: 4-hydroxy-3-methylbut-2-en-1-yl diphosphate synthase (flavodoxin) (372 aa).

Residues C270, C273, C305, and E312 each coordinate [4Fe-4S] cluster.

Belongs to the IspG family. The cofactor is [4Fe-4S] cluster.

It carries out the reaction (2E)-4-hydroxy-3-methylbut-2-enyl diphosphate + oxidized [flavodoxin] + H2O + 2 H(+) = 2-C-methyl-D-erythritol 2,4-cyclic diphosphate + reduced [flavodoxin]. Its pathway is isoprenoid biosynthesis; isopentenyl diphosphate biosynthesis via DXP pathway; isopentenyl diphosphate from 1-deoxy-D-xylulose 5-phosphate: step 5/6. Functionally, converts 2C-methyl-D-erythritol 2,4-cyclodiphosphate (ME-2,4cPP) into 1-hydroxy-2-methyl-2-(E)-butenyl 4-diphosphate. In Salmonella schwarzengrund (strain CVM19633), this protein is 4-hydroxy-3-methylbut-2-en-1-yl diphosphate synthase (flavodoxin).